Consider the following 749-residue polypeptide: Photosystem I P700 chlorophyll a apoprotein A1 (749 aa).

Helical transmembrane passes span 70–93 (VFSA…FHGA), 156–179 (LYAT…FHYH), 195–219 (LNHH…HVSL), 291–309 (TAHH…GHMY), 346–369 (WHAQ…HHMY), 385–411 (LSLF…IFLV), 433–455 (AIIS…LYIH), and 531–549 (FLVH…LILL). Residues C573 and C582 each coordinate [4Fe-4S] cluster. 2 consecutive transmembrane segments (helical) span residues 589-610 (HVFL…HFSW) and 663-685 (LSAY…MFLF). H674 lines the chlorophyll a' pocket. Positions 682 and 690 each coordinate chlorophyll a. Position 691 (W691) interacts with phylloquinone. Residues 723–743 (AVGVAHYLLGGIATTWAFFLA) form a helical membrane-spanning segment.

This sequence belongs to the PsaA/PsaB family. In terms of assembly, the PsaA/B heterodimer binds the P700 chlorophyll special pair and subsequent electron acceptors. PSI consists of a core antenna complex that captures photons, and an electron transfer chain that converts photonic excitation into a charge separation. The eukaryotic PSI reaction center is composed of at least 11 subunits. Requires P700 is a chlorophyll a/chlorophyll a' dimer, A0 is one or more chlorophyll a, A1 is one or both phylloquinones and FX is a shared 4Fe-4S iron-sulfur center. as cofactor.

It localises to the plastid. The protein localises to the chloroplast thylakoid membrane. It carries out the reaction reduced [plastocyanin] + hnu + oxidized [2Fe-2S]-[ferredoxin] = oxidized [plastocyanin] + reduced [2Fe-2S]-[ferredoxin]. Functionally, psaA and PsaB bind P700, the primary electron donor of photosystem I (PSI), as well as the electron acceptors A0, A1 and FX. PSI is a plastocyanin-ferredoxin oxidoreductase, converting photonic excitation into a charge separation, which transfers an electron from the donor P700 chlorophyll pair to the spectroscopically characterized acceptors A0, A1, FX, FA and FB in turn. Oxidized P700 is reduced on the lumenal side of the thylakoid membrane by plastocyanin. This chain is Photosystem I P700 chlorophyll a apoprotein A1, found in Zygnema circumcarinatum (Green alga).